A 315-amino-acid polypeptide reads, in one-letter code: Ribosomal RNA small subunit methyltransferase H (315 aa).

S-adenosyl-L-methionine is bound by residues G33–H35, D52, F84, D106, and Q113. The segment at S294 to L315 is disordered.

This sequence belongs to the methyltransferase superfamily. RsmH family.

It is found in the cytoplasm. It catalyses the reaction cytidine(1402) in 16S rRNA + S-adenosyl-L-methionine = N(4)-methylcytidine(1402) in 16S rRNA + S-adenosyl-L-homocysteine + H(+). Functionally, specifically methylates the N4 position of cytidine in position 1402 (C1402) of 16S rRNA. The chain is Ribosomal RNA small subunit methyltransferase H from Lactobacillus johnsonii (strain CNCM I-12250 / La1 / NCC 533).